The chain runs to 277 residues: Shikimate dehydrogenase (NADP(+)) (277 aa).

Shikimate is bound by residues 15-17 and T62; that span reads SLS. The active-site Proton acceptor is K66. The shikimate site is built by N87 and D102. NADP(+)-binding positions include 127 to 131, 151 to 156, and I219; these read GSGGA and NRTVDK. Residue Y221 coordinates shikimate. G242 is an NADP(+) binding site.

The protein belongs to the shikimate dehydrogenase family. As to quaternary structure, homodimer.

The catalysed reaction is shikimate + NADP(+) = 3-dehydroshikimate + NADPH + H(+). It participates in metabolic intermediate biosynthesis; chorismate biosynthesis; chorismate from D-erythrose 4-phosphate and phosphoenolpyruvate: step 4/7. Functionally, involved in the biosynthesis of the chorismate, which leads to the biosynthesis of aromatic amino acids. Catalyzes the reversible NADPH linked reduction of 3-dehydroshikimate (DHSA) to yield shikimate (SA). The protein is Shikimate dehydrogenase (NADP(+)) of Bacillus cereus (strain B4264).